The primary structure comprises 337 residues: Diacylglycerol acyltransferase/mycolyltransferase Ag85A (337 aa).

The N-terminal stretch at 1-42 (MKLVDRFRGAATGTSRRLMVGAVGAALLSGLVGFVGGSATAS) is a signal peptide. 85–86 (MR) contacts substrate. Residues 101–111 (FEWYYQSGISV) are fibronectin-binding. An intrachain disulfide couples C130 to C135. Substrate contacts are provided by S169 and D197. Catalysis depends on S169, which acts as the Nucleophile. E273 is an active-site residue. Substrate is bound by residues 275–278 (FVRT), K282, and 305–307 (HSW). The active site involves H305.

The protein belongs to the mycobacterial A85 antigen family. As to quaternary structure, homodimer.

It localises to the secreted. Its subcellular location is the cell wall. The protein localises to the cytoplasm. It carries out the reaction an acyl-CoA + a 1,2-diacyl-sn-glycerol = a triacyl-sn-glycerol + CoA. The enzyme catalyses 2 alpha,alpha'-trehalose 6-mycolate = alpha,alpha'-trehalose 6,6'-bismycolate + alpha,alpha-trehalose. The antigen 85 proteins (FbpA, FbpB, FbpC) are responsible for the high affinity of mycobacteria for fibronectin, a large adhesive glycoprotein, which facilitates the attachment of M.tuberculosis to murine alveolar macrophages (AMs). They also help to maintain the integrity of the cell wall by catalyzing the transfer of mycolic acids to cell wall arabinogalactan, and through the synthesis of alpha,alpha-trehalose dimycolate (TDM, cord factor). They catalyze the transfer of a mycoloyl residue from one molecule of alpha,alpha-trehalose monomycolate (TMM) to another TMM, leading to the formation of TDM. FbpA mediates triacylglycerol (TAG) formation with long-chain acyl-CoA as the acyl donor and 1,2-dipalmitoyl-sn-glycerol (1,2-dipalmitin) as the acyl acceptor. It has a preference for C26:0-CoA over C18:1-CoA. This is Diacylglycerol acyltransferase/mycolyltransferase Ag85A (fbpA) from Mycobacterium ulcerans.